The chain runs to 312 residues: Copper chaperone for superoxide dismutase, chloroplastic (312 aa).

A chloroplast-targeting transit peptide spans 1–78 (MVGFLRALTA…AAAAATADLS (78 aa)). The HMA domain maps to 89–152 (ELMTEFMVDM…TLHQTGRDAR (64 aa)). Residues cysteine 100, cysteine 103, cysteine 301, and cysteine 303 each coordinate Cu cation.

The protein in the C-terminal section; belongs to the Cu-Zn superoxide dismutase family. The cofactor is Cu(2+).

It is found in the plastid. The protein localises to the chloroplast. Functionally, copper chaperone for superoxide dismutases (SODs). Binds copper ions and delivers them specifically to SODs. Is required for assistance in SODs disulfide bond formation and thereby activation of SODs. In Oryza sativa subsp. japonica (Rice), this protein is Copper chaperone for superoxide dismutase, chloroplastic (CCS).